A 261-amino-acid chain; its full sequence is Methylmalonyl-CoA decarboxylase (261 aa).

Substrate-binding positions include 64–68, Gly110, Thr132, and Lys253; that span reads AGHDI.

The protein belongs to the enoyl-CoA hydratase/isomerase family. In terms of assembly, dimer of homotrimers.

The catalysed reaction is (R)-methylmalonyl-CoA + H(+) = propanoyl-CoA + CO2. In terms of biological role, catalyzes the decarboxylation of (R)-methylmalonyl-CoA to propionyl-CoA. Could be part of a pathway that converts succinate to propanoate. The chain is Methylmalonyl-CoA decarboxylase (scpB) from Escherichia coli (strain K12).